The primary structure comprises 879 residues: Leucine--tRNA ligase (879 aa).

The 'HIGH' region signature appears at 45 to 55 (PYPSGALHMGH). Positions 637-641 (KMSKS) match the 'KMSKS' region motif. Residue Lys640 participates in ATP binding.

Belongs to the class-I aminoacyl-tRNA synthetase family.

It is found in the cytoplasm. The catalysed reaction is tRNA(Leu) + L-leucine + ATP = L-leucyl-tRNA(Leu) + AMP + diphosphate. The sequence is that of Leucine--tRNA ligase from Xylella fastidiosa (strain M23).